The following is a 985-amino-acid chain: Coiled-coil domain-containing protein 33 (985 aa).

The interval 228 to 263 (MSPFSTDSDQEGLSWEAGPWQHPAQVPEEPQGRLDT) is disordered. The C2 domain occupies 263 to 398 (TSQDPYPAAN…VFLRGVNEPL (136 aa)). A coiled-coil region spans residues 599 to 745 (VEMNNYRRAM…LEERLCERKE (147 aa)). Residues 821 to 842 (AERLQDTNGPGHPKSTETLPAQ) form a disordered region. The stretch at 885–928 (DKFNLLAKLEQAQSRILSLENQLEESARHWAREKQNLAIRLQEQ) forms a coiled coil. Residues 931 to 985 (GFGQPPNSIIIDQPNAGASKNPQQLSKLEPSLPSSDKKLNRPSDSQIEISNNQKT) are disordered. 2 stretches are compositionally biased toward polar residues: residues 946-956 (AGASKNPQQLS) and 972-985 (PSDS…NQKT).

This is Coiled-coil domain-containing protein 33 (Ccdc33) from Mus musculus (Mouse).